A 355-amino-acid polypeptide reads, in one-letter code: Alanine racemase (355 aa).

Lysine 34 functions as the Proton acceptor; specific for D-alanine in the catalytic mechanism. Lysine 34 carries the N6-(pyridoxal phosphate)lysine modification. Arginine 133 contributes to the substrate binding site. Tyrosine 249 (proton acceptor; specific for L-alanine) is an active-site residue. A substrate-binding site is contributed by methionine 297.

This sequence belongs to the alanine racemase family. Pyridoxal 5'-phosphate serves as cofactor.

It carries out the reaction L-alanine = D-alanine. It participates in amino-acid biosynthesis; D-alanine biosynthesis; D-alanine from L-alanine: step 1/1. In terms of biological role, catalyzes the interconversion of L-alanine and D-alanine. May also act on other amino acids. This is Alanine racemase (alr) from Rickettsia rickettsii (strain Sheila Smith).